Reading from the N-terminus, the 177-residue chain is Translation initiation factor IF-3 (177 aa).

Belongs to the IF-3 family. Monomer.

It is found in the cytoplasm. In terms of biological role, IF-3 binds to the 30S ribosomal subunit and shifts the equilibrium between 70S ribosomes and their 50S and 30S subunits in favor of the free subunits, thus enhancing the availability of 30S subunits on which protein synthesis initiation begins. This chain is Translation initiation factor IF-3, found in Clostridium perfringens (strain 13 / Type A).